A 365-amino-acid polypeptide reads, in one-letter code: Glial fibrillary acidic protein (365 aa).

The head stretch occupies residues 1–5 (REVDR). One can recognise an IF rod domain in the interval 2–310 (EVDRVMGLND…KLLEGEESRI (309 aa)). The tract at residues 6–37 (VMGLNDRFASYIEKVRFLEQQNKMLVAELNQL) is coil 1A. Residues 38–48 (RGKEPSRLGDI) form a linker 1 region. The tract at residues 49-147 (YQEELRELRR…EEEMRQLQEQ (99 aa)) is coil 1B. The interval 148–163 (LIAQQVHVDLDVSKPD) is linker 12. Positions 164–185 (LTTALKEIRAQFEAMATSNMQE) are coil 2A. Positions 186–189 (TEEW) are linker 2. The segment at 190–310 (YRSKFADLTD…KLLEGEESRI (121 aa)) is coil 2B. The segment at 311 to 365 (TVPVQNFTNLQFRDTSLDTKLTPEAHVKRSIVVRTVETRDGEIIKESTTERKDLP) is tail.

Belongs to the intermediate filament family.

This chain is Glial fibrillary acidic protein (gfap), found in Carassius auratus (Goldfish).